The primary structure comprises 322 residues: Arginase-1 (322 aa).

Over residues 1 to 12 (MSSKSKSIGIIG) the composition is skewed to low complexity. Positions 1 to 26 (MSSKSKSIGIIGAPFSKGQPRGGVEE) are disordered. The residue at position 7 (Ser7) is a Phosphoserine. Position 17 is an N6-succinyllysine (Lys17). Ser62 bears the Phosphoserine mark. Residues His101, Asp124, His126, and Asp128 each contribute to the Mn(2+) site. Substrate-binding positions include 126–130 (HTDIN) and 137–139 (SGN). Ser163 bears the Phosphoserine mark. A substrate-binding site is contributed by Asp183. Mn(2+)-binding residues include Asp232 and Asp234. Substrate contacts are provided by Thr246 and Glu277.

The protein belongs to the arginase family. In terms of assembly, homotrimer. Interacts with CMTM6. Requires Mn(2+) as cofactor.

The protein resides in the cytoplasm. It carries out the reaction L-arginine + H2O = urea + L-ornithine. It participates in nitrogen metabolism; urea cycle; L-ornithine and urea from L-arginine: step 1/1. In Oryctolagus cuniculus (Rabbit), this protein is Arginase-1 (ARG1).